A 231-amino-acid chain; its full sequence is Eukaryotic translation initiation factor 4E allele Eva1 (231 aa).

Positions 1–20 (MAAAEMERTTSFDAAEKLKA) are enriched in basic and acidic residues. Positions 1-34 (MAAAEMERTTSFDAAEKLKAADAGGGEVDDELEE) are disordered. EIF4G-binding regions lie at residues 56-59 (HPLE) and 66-102 (FDNPTARSRQIDWGSSLRNVYTFSTVEDFWGAYNNIH). MRNA contacts are provided by residues 74-79 (RQIDWG), lysine 106, and 124-125 (WE). Residues cysteine 129 and cysteine 167 are joined by a disulfide bond. An EIF4G-binding region spans residues 150–159 (YTLLAMIGHQ). Residues 174–179 (RVKGEK) and 219–223 (KRLDR) contribute to the mRNA site.

Belongs to the eukaryotic initiation factor 4E family. EIF4F is a multi-subunit complex, the composition of which varies with external and internal environmental conditions. It is composed of at least EIF4A, EIF4E and EIF4G. EIF4E is also known to interact with other partners. In higher plants two isoforms of EIF4F have been identified, named isoform EIF4F and isoform EIF(iso)4F. Isoform EIF4F has subunits p220 and p26, whereas isoform EIF(iso)4F has subunits p82 and p28. As to quaternary structure, (Microbial infection) Interacts with potyvirus viral genome-linked protein (VPg); this interaction is possible in susceptible hosts but impaired in resistant plants. In terms of processing, according to the redox status, the Cys-129-Cys-167 disulfide bridge may have a role in regulating protein function by affecting its ability to bind capped mRNA.

It is found in the nucleus. The protein resides in the cytoplasm. Its function is as follows. Component of the protein complex eIF4F, which is involved in the recognition of the mRNA cap, ATP-dependent unwinding of 5'-terminal secondary structure and recruitment of mRNA to the ribosome. Recognizes and binds the 7-methylguanosine-containing mRNA cap during an early step in the initiation of protein synthesis and facilitates ribosome binding by inducing the unwinding of the mRNAs secondary structures. Key component of recessive resistance to potyviruses. In terms of biological role, (Microbial infection) Susceptibility host factor required for viral infection (e.g. Potato virus Y (PVY)) by recruiting viral RNAs to the host ribosomal complex via an interaction with viral genome-linked protein (VPg). Displayed sequence is the allele Eva1 that confers resistance to potato virus Y (PVY) by failing to interact with the viral VPg protein. In Solanum etuberosum (Wild potato), this protein is Eukaryotic translation initiation factor 4E allele Eva1.